The primary structure comprises 544 residues: Chaperonin GroEL 4 (544 aa).

Residues 30–33 (TLGP), K51, 87–91 (DGTTT), G415, and D496 each bind ATP.

Belongs to the chaperonin (HSP60) family. As to quaternary structure, forms a cylinder of 14 subunits composed of two heptameric rings stacked back-to-back. Interacts with the co-chaperonin GroES.

It is found in the cytoplasm. The catalysed reaction is ATP + H2O + a folded polypeptide = ADP + phosphate + an unfolded polypeptide.. Together with its co-chaperonin GroES, plays an essential role in assisting protein folding. The GroEL-GroES system forms a nano-cage that allows encapsulation of the non-native substrate proteins and provides a physical environment optimized to promote and accelerate protein folding. The sequence is that of Chaperonin GroEL 4 from Sinorhizobium medicae (strain WSM419) (Ensifer medicae).